The sequence spans 1122 residues: MTRAPRCPAVRSLLRSRYREVWPLATFVRRLGPEGRRLVQPGDPKIYRTLVAQCLVCMHWGSQPPPADLSFHQVSSLKELVARVVQRLCERNERNVLAFGFELLNEARGGPPMAFTSSVRSYLPNTVIETLRVSGAWMLLLSRVGDDLLVYLLAHCALYLLVPPSCAYQVCGSPLYQICATTDIWPSVSASYRPTRPVGRNFTNLRFLQQIKSSSRQEAPKPLALPSRGTKRHLSLTSTSVPSAKKARCYPVPRVEEGPHRQVLPTPSGKSWVPSPARSPEVPTAEKDLSSKGKVSDLSLSGSVCCKHKPSSTSLLSPPRQNAFQLRPFIETRHFLYSRGDGQERLNPSFLLSNLQPNLTGARRLVEIIFLGSRPRTSGPLCRTHRLSRRYWQMRPLFQQLLVNHAECQYVRLLRSHCRFRTANQQVTDALNTSPPHLMDLLRLHSSPWQVYGFLRACLCKVVSASLWGTRHNERRFFKNLKKFISLGKYGKLSLQELMWKMKVEDCHWLRSSPGKDRVPAAEHRLRERILATFLFWLMDTYVVQLLRSFFYITESTFQKNRLFFYRKSVWSKLQSIGVRQHLERVRLRELSQEEVRHHQDTWLAMPICRLRFIPKPNGLRPIVNMSYSMGTRALGRRKQAQHFTQRLKTLFSMLNYERTKHPHLMGSSVLGMNDIYRTWRAFVLRVRALDQTPRMYFVKADVTGAYDAIPQGKLVEVVANMIRHSESTYCIRQYAVVRRDSQGQVHKSFRRQVTTLSDLQPYMGQFLKHLQDSDASALRNSVVIEQSISMNESSSSLFDFFLHFLRHSVVKIGDRCYTQCQGIPQGSSLSTLLCSLCFGDMENKLFAEVQRDGLLLRFVDDFLLVTPHLDQAKTFLSTLVHGVPEYGCMINLQKTVVNFPVEPGTLGGAAPYQLPAHCLFPWCGLLLDTQTLEVFCDYSGYAQTSIKTSLTFQSVFKAGKTMRNKLLSVLRLKCHGLFLDLQVNSLQTVCINIYKIFLLQAYRFHACVIQLPFDQRVRKNLTFFLGIISSQASCCYAILKVKNPGMTLKASGSFPPEAAHWLCYQAFLLKLAAHSVIYKCLLGPLRTAQKLLCRKLPEATMTILKAAADPALSTDFQTILD.

Residues 1–239 (MTRAPRCPAV…TKRHLSLTST (239 aa)) are RNA-interacting domain 1. The GQ motif stretch occupies residues 58 to 205 (MHWGSQPPPA…RPVGRNFTNL (148 aa)). Residues 137–141 (WMLLL) are required for regulating specificity for telomeric DNA and for processivity for primer elongation. Residues 213–296 (SSSRQEAPKP…KDLSSKGKVS (84 aa)) form a disordered region. Residues 240 to 328 (SVPSAKKARC…PRQNAFQLRP (89 aa)) form a linker region. Residues 284 to 295 (TAEKDLSSKGKV) are compositionally biased toward basic and acidic residues. Positions 306-528 (CKHKPSSTSL…VPAAEHRLRE (223 aa)) are required for oligomerization. The RNA-interacting domain 2 stretch occupies residues 329 to 540 (FIETRHFLYS…LATFLFWLMD (212 aa)). Residues 332-337 (TRHFLY) carry the TFLY; involved in RNA binding motif. The segment at 381–511 (LCRTHRLSRR…MKVEDCHWLR (131 aa)) is QFP motif. Residues 402–422 (LVNHAECQYVRLLRSHCRFRT) form a CP motif region. S447 is subject to Phosphoserine; by DYRK2. The 334-residue stretch at 595–928 (EVRHHQDTWL…CLFPWCGLLL (334 aa)) folds into the Reverse transcriptase domain. Y697 is subject to Phosphotyrosine; by SRC-type Tyr-kinases. 3 residues coordinate Mg(2+): D702, D861, and D862. The tract at residues 907 to 921 (LGGAAPYQLPAHCLF) is required for oligomerization. A primer grip sequence region spans residues 923–927 (WCGLL). Residues 929-1122 (DTQTLEVFCD…LSTDFQTILD (194 aa)) are CTE.

Belongs to the reverse transcriptase family. Telomerase subfamily. As to quaternary structure, catalytic component of the telomerase holoenzyme complex composed of one molecule of TERT, one molecule of WRAP53/TCAB1, two molecules of H/ACA ribonucleoprotein complex subunits DKC1, NOP10, NHP2 and GAR1, and a telomerase RNA template component (TERC). The telomerase holoenzyme complex is associated with TEP1, SMG6/EST1A and POT1. The molecular chaperone HSP90/P23 complex is required for correct assembly and stabilization of the active telomerase. Interacts directly with HSP90A and PTGES3. Interacts with HSPA1A; the interaction occurs in the absence of TERC and dissociates once the complex has formed. Interacts with RAN; the interaction promotes nuclear export of TERT. Interacts with XPO1. Interacts with PTPN11; the interaction retains TERT in the nucleus. Interacts with NCL (via RRM1 and C-terminal RRM4/Arg/Gly-rich domains); the interaction is important for nucleolar localization of TERT. Interacts with SMARCA4 (via the bromodomain); the interaction regulates Wnt-mediated signaling. Interacts with MCRS1 (isoform MCRS2); the interaction inhibits in vitro telomerase activity. Interacts with PIF1; the interaction has no effect on the elongation activity of TERT. Interacts with PML; the interaction recruits TERT to PML bodies and inhibits telomerase activity. Interacts with GNL3L. Interacts with isoform 1 and isoform 2 of NVL. Interacts with DHX36. Interacts with ATF7. Phosphorylation at Tyr-697 under oxidative stress leads to translocation of TERT to the cytoplasm and reduces its antiapoptotic activity. Dephosphorylated by SHP2/PTPN11 leading to nuclear retention. Phosphorylation by the AKT pathway promotes nuclear location. Phosphorylation at the G2/M phase at Ser-447 by DYRK2 promotes ubiquitination by the EDVP complex and degradation. Post-translationally, ubiquitinated by the EDVP complex, a E3 ligase complex following phosphorylation at Ser-447 by DYRK2. Ubiquitinated leads to proteasomal degradation. In terms of tissue distribution, high activity in intestine, liver and testis, moderate in lung, very low in muscle, heart and brain.

It is found in the nucleus. The protein resides in the nucleolus. Its subcellular location is the nucleoplasm. The protein localises to the chromosome. It localises to the telomere. It is found in the cytoplasm. The protein resides in the PML body. The enzyme catalyses DNA(n) + a 2'-deoxyribonucleoside 5'-triphosphate = DNA(n+1) + diphosphate. Its function is as follows. Telomerase is a ribonucleoprotein enzyme essential for the replication of chromosome termini in most eukaryotes. Active in progenitor and cancer cells. Inactive, or very low activity, in normal somatic cells. Catalytic component of the teleromerase holoenzyme complex whose main activity is the elongation of telomeres by acting as a reverse transcriptase that adds simple sequence repeats to chromosome ends by copying a template sequence within the RNA component of the enzyme. Catalyzes the RNA-dependent extension of 3'-chromosomal termini with the 6-nucleotide telomeric repeat unit, 5'-TTAGGG-3'. The catalytic cycle involves primer binding, primer extension and release of product once the template boundary has been reached or nascent product translocation followed by further extension. More active on substrates containing 2 or 3 telomeric repeats. Telomerase activity is regulated by a number of factors including telomerase complex-associated proteins, chaperones and polypeptide modifiers. Modulates Wnt signaling. Plays important roles in aging and antiapoptosis. The sequence is that of Telomerase reverse transcriptase (Tert) from Mus musculus (Mouse).